We begin with the raw amino-acid sequence, 712 residues long: Glycine--tRNA ligase beta subunit (712 aa).

This sequence belongs to the class-II aminoacyl-tRNA synthetase family. Tetramer of two alpha and two beta subunits.

The protein resides in the cytoplasm. The enzyme catalyses tRNA(Gly) + glycine + ATP = glycyl-tRNA(Gly) + AMP + diphosphate. The polypeptide is Glycine--tRNA ligase beta subunit (Acaryochloris marina (strain MBIC 11017)).